A 113-amino-acid polypeptide reads, in one-letter code: MTISAQVIDTIVEWIDDNLHQPLRIDDIARHAGYSKWHLQRLFLQYKGESLGRYIRERKLLLAARDLRDTDQRVYDICLKYGFDSQQTFTRVFTRTFNQPPGAYRKENHSRAH.

Residues 9–107 enclose the HTH araC/xylS-type domain; that stretch reads DTIVEWIDDN…NQPPGAYRKE (99 aa). 2 DNA-binding regions (H-T-H motif) span residues 26-47 and 74-97; these read DDIA…LQYK and VYDI…TRTF.

In terms of assembly, monomer. Interacts with the C-terminus of RNAP subunit RpoA when part of class I or class II promoter complexes. Also interacts with sigma-70/RpoD in class II promoter complexes.

Functionally, transcriptional regulator. Binds to regulatory regions of target genes, including its own gene, efflux pump operon acrAB, antisense RNA gene micF, and various genes involved in lipid A biosynthesis, including lpxO and lpxL-2. Regulates expression of many genes, perhaps including its own; activates various lipid A biosynthetic genes, and as a result of activating acrAB, confers multidrug resistance. Plays a role in virulence and survival in host cells. This chain is Transcriptional regulator RamA, found in Klebsiella pneumoniae subsp. pneumoniae (strain HS11286).